Reading from the N-terminus, the 168-residue chain is Mitochondrial inner membrane protein SHH4 (168 aa).

The N-terminal 23 residues, 1 to 23, are a transit peptide targeting the mitochondrion; the sequence is MSSTKFLKPLCRIRAFHTSIARS. Residues 24–65 are Mitochondrial matrix-facing; it reads FTIPFLPKIPQKPGGVSGTANDSSYMPPESRAQGSYHWIVER. A helical membrane pass occupies residues 66 to 86; sequence GLSLAVLPLIAVPLVTTGPIS. The Mitochondrial intermembrane portion of the chain corresponds to 87–92; that stretch reads TFTDTF. The chain crosses the membrane as a helical span at residues 93-113; it reads LSLVLLGHCHIGFQSCIIDYI. Cysteine 101 is a binding site for heme. Tyrosine 112 contacts a ubiquinone. Residues 114–120 lie on the Mitochondrial matrix side of the membrane; that stretch reads SERVYGK. A helical membrane pass occupies residues 121–141; sequence VHHYAMYLLSLGSFLSFVGIY. The Mitochondrial intermembrane segment spans residues 142-168; that stretch reads KLESQEAGLIASLKSLWDNKPVEKKRQ.

The protein belongs to the CybS family. Interacts with SDH3.

The protein localises to the mitochondrion inner membrane. Functionally, homolog of SDH4, but seems not to be a stoichiometric subunit of either the succinate dehydrogenase (SDH) complex or the mitochondrial inner membrane translocase TIM22 complex. The polypeptide is Mitochondrial inner membrane protein SHH4 (Saccharomyces cerevisiae (strain ATCC 204508 / S288c) (Baker's yeast)).